A 52-amino-acid chain; its full sequence is ATP synthase protein 8 (52 aa).

The helical transmembrane segment at 7–27 (MKWFLIYFIYLLIFYLFIMLI) threads the bilayer.

The protein belongs to the ATPase protein 8 family. As to quaternary structure, F-type ATPases have 2 components, CF(1) - the catalytic core - and CF(0) - the membrane proton channel.

The protein localises to the mitochondrion membrane. Mitochondrial membrane ATP synthase (F(1)F(0) ATP synthase or Complex V) produces ATP from ADP in the presence of a proton gradient across the membrane which is generated by electron transport complexes of the respiratory chain. F-type ATPases consist of two structural domains, F(1) - containing the extramembraneous catalytic core and F(0) - containing the membrane proton channel, linked together by a central stalk and a peripheral stalk. During catalysis, ATP synthesis in the catalytic domain of F(1) is coupled via a rotary mechanism of the central stalk subunits to proton translocation. Part of the complex F(0) domain. Minor subunit located with subunit a in the membrane. The sequence is that of ATP synthase protein 8 (mt:ATPase8) from Apis mellifera ligustica (Common honeybee).